The sequence spans 305 residues: Serine/threonine-protein kinase 16 (305 aa).

Glycine 2 carries N-myristoyl glycine lipidation. 2 S-palmitoyl cysteine lipidation sites follow: cysteine 6 and cysteine 8. In terms of domain architecture, Protein kinase spans 20 to 293 (YLFVQKLGEG…PVLLSQLEAL (274 aa)). ATP-binding positions include 26 to 34 (LGEGGFSYV) and lysine 49. Catalysis depends on aspartate 148, which acts as the Proton acceptor. The activation loop stretch occupies residues 166-202 (DLGSMNQACIQVEGSRQALALQDWAAQRCTISYRAPE). Residue serine 197 is modified to Phosphoserine; by autocatalysis. At tyrosine 198 the chain carries Phosphotyrosine; by autocatalysis.

The protein belongs to the protein kinase superfamily. Ser/Thr protein kinase family. In terms of assembly, monomer. Interacts with DRG1 (via its N-terminal); the interaction phosphorylates DRG1. In terms of processing, mainly autophosphorylated on serine/threonine residues. Also autophosphorylated on Tyr-198. Ubiquitously expressed at low levels. Relatively higher levels in testis, kidney and liver.

It is found in the cytoplasm. Its subcellular location is the perinuclear region. The protein resides in the membrane. The catalysed reaction is L-seryl-[protein] + ATP = O-phospho-L-seryl-[protein] + ADP + H(+). It carries out the reaction L-threonyl-[protein] + ATP = O-phospho-L-threonyl-[protein] + ADP + H(+). The enzyme catalyses L-tyrosyl-[protein] + ATP = O-phospho-L-tyrosyl-[protein] + ADP + H(+). Its function is as follows. Membrane-associated protein kinase that phosphorylates on serine and threonine residues. In vitro substrates include DRG1, ENO1 and EIF4EBP1. Also autophosphorylates. May be involved in secretory vesicle trafficking or intracellular signaling. May have a role in regulating stromal-epithelial interactions that occur during ductal morphogenesis in the mammary gland. May be involved in TGF-beta signaling. Able to autophosphorylate on Tyr residue; it is however unclear whether it has tyrosine-protein kinase toward other proteins. This is Serine/threonine-protein kinase 16 (Stk16) from Mus musculus (Mouse).